The primary structure comprises 311 residues: Putative dihydroorotate dehydrogenase A (fumarate) (311 aa).

Substrate is bound by residues K45, 69–73 (NSMGL), and N128. An FMN-binding site is contributed by 45–46 (KT). N128 contacts FMN. Catalysis depends on C131, which acts as the Nucleophile. FMN contacts are provided by K165 and V193. Residue 194 to 195 (NS) participates in substrate binding. FMN is bound by residues G220, 248–249 (GG), and 270–271 (GT).

Belongs to the dihydroorotate dehydrogenase family. Type 1 subfamily. In terms of assembly, homodimer. It depends on FMN as a cofactor.

The protein resides in the cytoplasm. The catalysed reaction is (S)-dihydroorotate + fumarate = orotate + succinate. The protein operates within pyrimidine metabolism; UMP biosynthesis via de novo pathway. Its function is as follows. Catalyzes the conversion of dihydroorotate to orotate with fumarate as the electron acceptor. The sequence is that of Putative dihydroorotate dehydrogenase A (fumarate) (pyrD) from Streptococcus pyogenes serotype M3 (strain SSI-1).